The primary structure comprises 556 residues: 2-isopropylmalate synthase (556 aa).

Positions 33–307 (PIWCSSDLRD…DPELDFSDID (275 aa)) constitute a Pyruvate carboxyltransferase domain. The Mg(2+) site is built by D42, H246, H248, and N282. The regulatory domain stretch occupies residues 439–556 (ANTPYALISH…SLSQTQAKAA (118 aa)).

It belongs to the alpha-IPM synthase/homocitrate synthase family. LeuA type 2 subfamily. In terms of assembly, homodimer. Requires Mg(2+) as cofactor.

The protein resides in the cytoplasm. The enzyme catalyses 3-methyl-2-oxobutanoate + acetyl-CoA + H2O = (2S)-2-isopropylmalate + CoA + H(+). The protein operates within amino-acid biosynthesis; L-leucine biosynthesis; L-leucine from 3-methyl-2-oxobutanoate: step 1/4. In terms of biological role, catalyzes the condensation of the acetyl group of acetyl-CoA with 3-methyl-2-oxobutanoate (2-ketoisovalerate) to form 3-carboxy-3-hydroxy-4-methylpentanoate (2-isopropylmalate). The sequence is that of 2-isopropylmalate synthase from Pseudomonas savastanoi pv. phaseolicola (strain 1448A / Race 6) (Pseudomonas syringae pv. phaseolicola (strain 1448A / Race 6)).